A 351-amino-acid polypeptide reads, in one-letter code: Probable dual-specificity RNA methyltransferase RlmN (351 aa).

The active-site Proton acceptor is the Glu97. The region spanning 103–337 (YDYGNTVCIS…VTVRKERGVD (235 aa)) is the Radical SAM core domain. An intrachain disulfide couples Cys110 to Cys342. [4Fe-4S] cluster is bound by residues Cys117, Cys121, and Cys124. Residues 166–167 (GE), Ser198, 221–223 (SLH), and Asn299 each bind S-adenosyl-L-methionine. Cys342 serves as the catalytic S-methylcysteine intermediate.

It belongs to the radical SAM superfamily. RlmN family. [4Fe-4S] cluster serves as cofactor.

Its subcellular location is the cytoplasm. It catalyses the reaction adenosine(2503) in 23S rRNA + 2 reduced [2Fe-2S]-[ferredoxin] + 2 S-adenosyl-L-methionine = 2-methyladenosine(2503) in 23S rRNA + 5'-deoxyadenosine + L-methionine + 2 oxidized [2Fe-2S]-[ferredoxin] + S-adenosyl-L-homocysteine. The catalysed reaction is adenosine(37) in tRNA + 2 reduced [2Fe-2S]-[ferredoxin] + 2 S-adenosyl-L-methionine = 2-methyladenosine(37) in tRNA + 5'-deoxyadenosine + L-methionine + 2 oxidized [2Fe-2S]-[ferredoxin] + S-adenosyl-L-homocysteine. Its function is as follows. Specifically methylates position 2 of adenine 2503 in 23S rRNA and position 2 of adenine 37 in tRNAs. In Natranaerobius thermophilus (strain ATCC BAA-1301 / DSM 18059 / JW/NM-WN-LF), this protein is Probable dual-specificity RNA methyltransferase RlmN.